We begin with the raw amino-acid sequence, 431 residues long: Probable prephenate dehydrogenase [NADP(+)] (431 aa).

An NADP(+)-binding site is contributed by 5–34; it reads FQVGIIGFGDMGRLYAEYISKAGWRVNVCD. Residues 5-285 enclose the Prephenate/arogenate dehydrogenase domain; that stretch reads FQVGIIGFGD…GENMDRNSSG (281 aa).

This sequence belongs to the prephenate/arogenate dehydrogenase family.

Its subcellular location is the cytoplasm. The catalysed reaction is prephenate + NADP(+) = 3-(4-hydroxyphenyl)pyruvate + CO2 + NADPH. The protein operates within amino-acid biosynthesis; L-tyrosine biosynthesis; (4-hydroxyphenyl)pyruvate from prephenate (NADP(+) route): step 1/1. The protein is Probable prephenate dehydrogenase [NADP(+)] (tyr1) of Schizosaccharomyces pombe (strain 972 / ATCC 24843) (Fission yeast).